Consider the following 181-residue polypeptide: Small ribosomal subunit protein uS4 (181 aa).

Residues 104-166 form the S4 RNA-binding domain; it reads RRLQTIVYKK…VTSSFKSRPP (63 aa).

The protein belongs to the universal ribosomal protein uS4 family. As to quaternary structure, part of the 30S ribosomal subunit. Contacts protein S5. The interaction surface between S4 and S5 is involved in control of translational fidelity.

One of the primary rRNA binding proteins, it binds directly to 16S rRNA where it nucleates assembly of the body of the 30S subunit. Its function is as follows. With S5 and S12 plays an important role in translational accuracy. This is Small ribosomal subunit protein uS4 from Saccharolobus islandicus (strain Y.N.15.51 / Yellowstone #2) (Sulfolobus islandicus).